Consider the following 188-residue polypeptide: Putative manganese efflux pump MntP (188 aa).

A run of 6 helical transmembrane segments spans residues 3–23, 35–55, 70–90, 104–126, 140–160, and 167–187; these read LYAL…VALA, IAAT…AGWV, WAAF…GLSG, WLTV…GLAF, MATT…GVLF, and AGGL…LGLI.

Belongs to the MntP (TC 9.B.29) family.

It localises to the cell inner membrane. In terms of biological role, probably functions as a manganese efflux pump. The protein is Putative manganese efflux pump MntP of Neisseria meningitidis serogroup C / serotype 2a (strain ATCC 700532 / DSM 15464 / FAM18).